Here is a 468-residue protein sequence, read N- to C-terminus: Intramembrane protease 2 (468 aa).

Topologically, residues 1–22 are lumenal; sequence MAEAATEIPPTASNVTVFTFEE. Asn14 carries N-linked (GlcNAc...) asparagine glycosylation. The helical transmembrane segment at 23-43 threads the bilayer; sequence QATSSLALYGMSILCIIIGSI. The Cytoplasmic segment spans residues 44–70; sequence RSAQYIRTNIDKKRLIEGSITMREARK. A helical membrane pass occupies residues 71–91; it reads FPISASLVLFGLYLFFKPAAE. Residues 92 to 168 are Lumenal-facing; that stretch reads RFLWVARVFQ…TNLPTIQKAE (77 aa). Residues Asn114 and Asn123 are each glycosylated (N-linked (GlcNAc...) asparagine). A helical transmembrane segment spans residues 169–189; the sequence is CMQLLTFLICFEGVNAFASLL. Residues 190–247 are Cytoplasmic-facing; that stretch reads KPFVTAFLKKMPLVPSFLRFNAPYLFSLKKGNKEMEEGDIEDAKKKETEYLFKIDFDR. The helical transmembrane segment at 248-265 threads the bilayer; the sequence is YDIIALLMCSPILISHLL. Residues 266 to 267 are Lumenal-facing; it reads KR. The chain crosses the membrane as a helical span at residues 268 to 284; the sequence is HWITNNIIGVSFSILGI. Residues 285 to 296 are Cytoplasmic-facing; sequence ERLHLASFKAGS. A helical membrane pass occupies residues 297 to 317; sequence LLLVGLFFYDIFWVFGTDVMT. Asp306 is a catalytic residue. The Lumenal segment spans residues 318–343; that stretch reads SVAKGIDAPILLQFPQDIYRNGIMEA. Residues 344-364 traverse the membrane as a helical segment; sequence SKHSMLGLGDIVIPGIFIALL. Asp353 is an active-site residue. Topologically, residues 365–388 are cytoplasmic; that stretch reads RRFDYRVVQTTAESKAPQGSLKGR. A helical transmembrane segment spans residues 389–409; that stretch reads YYFVVTVVAYMAGLFITMAVM. At 410-415 the chain is on the lumenal side; that stretch reads HHFKAA. Residues 416–436 form a helical membrane-spanning segment; sequence QPALLYLVPCCLFVPLLLAVI. The PAL motif lies at 417–419; that stretch reads PAL. Over 437–468 the chain is Cytoplasmic; that stretch reads RGELSALWNYDESRHVDNEENRKKVDSGKKNN.

It belongs to the peptidase A22B family.

The protein localises to the membrane. Its subcellular location is the endoplasmic reticulum membrane. Acts as intramembrane protease. In larvae, required for the complete shedding of the cuticle during molting, possibly by regulating cholesterol uptake via lrp-1. Involved in embryonic and larval development. The sequence is that of Intramembrane protease 2 from Caenorhabditis elegans.